Consider the following 848-residue polypeptide: DNA mismatch repair protein MutS (848 aa).

605–612 (GPNMAGKS) serves as a coordination point for ATP.

It belongs to the DNA mismatch repair MutS family.

Its function is as follows. This protein is involved in the repair of mismatches in DNA. It is possible that it carries out the mismatch recognition step. This protein has a weak ATPase activity. This is DNA mismatch repair protein MutS from Leptospira interrogans serogroup Icterohaemorrhagiae serovar Lai (strain 56601).